Here is a 159-residue protein sequence, read N- to C-terminus: Cyclic pyranopterin monophosphate synthase (159 aa).

Substrate-binding positions include 74 to 76 (MCH) and 112 to 113 (ME). The active site involves aspartate 127.

It belongs to the MoaC family. In terms of assembly, homohexamer; trimer of dimers.

The catalysed reaction is (8S)-3',8-cyclo-7,8-dihydroguanosine 5'-triphosphate = cyclic pyranopterin phosphate + diphosphate. It participates in cofactor biosynthesis; molybdopterin biosynthesis. In terms of biological role, catalyzes the conversion of (8S)-3',8-cyclo-7,8-dihydroguanosine 5'-triphosphate to cyclic pyranopterin monophosphate (cPMP). This is Cyclic pyranopterin monophosphate synthase from Helicobacter hepaticus (strain ATCC 51449 / 3B1).